The following is a 494-amino-acid chain: Glycerol kinase (494 aa).

Threonine 12 is a binding site for ADP. Residues threonine 12, threonine 13, and serine 14 each contribute to the ATP site. Sn-glycerol 3-phosphate is bound at residue threonine 12. Arginine 16 provides a ligand contact to ADP. Residues arginine 82, glutamate 83, tyrosine 134, and aspartate 241 each coordinate sn-glycerol 3-phosphate. 5 residues coordinate glycerol: arginine 82, glutamate 83, tyrosine 134, aspartate 241, and glutamine 242. Residues threonine 263 and glycine 306 each contribute to the ADP site. Threonine 263, glycine 306, glutamine 310, and glycine 407 together coordinate ATP. Glycine 407 is a binding site for ADP.

The protein belongs to the FGGY kinase family.

The enzyme catalyses glycerol + ATP = sn-glycerol 3-phosphate + ADP + H(+). The protein operates within polyol metabolism; glycerol degradation via glycerol kinase pathway; sn-glycerol 3-phosphate from glycerol: step 1/1. Its activity is regulated as follows. Inhibited by fructose 1,6-bisphosphate (FBP). Its function is as follows. Key enzyme in the regulation of glycerol uptake and metabolism. Catalyzes the phosphorylation of glycerol to yield sn-glycerol 3-phosphate. The protein is Glycerol kinase of Brachyspira hyodysenteriae (strain ATCC 49526 / WA1).